A 690-amino-acid chain; its full sequence is Lipase 2 (690 aa).

A signal peptide spans 1 to 37 (MLRGQEERKYSIRKYSIGVVSVLAATMFVVSSHEAQA). Residues 52 to 71 (LNQPGEQGNAITSHQMQSGK) are compositionally biased toward polar residues. Residues 52–266 (LNQPGEQGNA…KPTDKNTDNK (215 aa)) form a disordered region. Positions 72–81 (QLDDMHKENG) are enriched in basic and acidic residues. 3 stretches are compositionally biased toward polar residues: residues 82 to 114 (KSGT…NDNQ), 124 to 171 (SKQS…QPSI), and 185 to 206 (PTST…AQDA). 2 stretches are compositionally biased toward basic and acidic residues: residues 225 to 237 (IDAK…RQSE) and 257 to 266 (KPTDKNTDNK). Active-site charge relay system residues include Ser-412 and His-645.

Belongs to the AB hydrolase superfamily. Lipase family.

It is found in the secreted. The enzyme catalyses a triacylglycerol + H2O = a diacylglycerol + a fatty acid + H(+). The protein is Lipase 2 (lip2) of Staphylococcus aureus (strain NCTC 8325 / PS 47).